A 417-amino-acid polypeptide reads, in one-letter code: Phosphoglycerate kinase, cytosolic (417 aa).

Residues valine 23, aspartate 24, phenylalanine 25, asparagine 26, arginine 39, serine 61, histidine 62, glycine 64, arginine 65, arginine 132, histidine 168, and arginine 169 each coordinate (2R)-3-phosphoglycerate. The ADP site is built by glycine 214 and alanine 215. Glycine 214 is a binding site for CDP. Alanine 215 and lysine 216 together coordinate AMP. Residue alanine 215 participates in ATP binding. Alanine 215 contacts Mg(2+). A (2R)-3-phosphoglycerate-binding site is contributed by lysine 216. Aspartate 219 provides a ligand contact to CDP. Residue aspartate 219 participates in Mg(2+) binding. ADP-binding residues include lysine 220 and glycine 238. Residue lysine 220 participates in AMP binding. Lysine 220 lines the ATP pocket. Glycine 238 provides a ligand contact to CDP. AMP is bound by residues alanine 239 and alanine 311. Residues alanine 239 and alanine 311 each coordinate ATP. Residues alanine 311 and asparagine 335 each contribute to the ADP site. CDP is bound by residues glycine 336 and phenylalanine 341. Phenylalanine 341, glutamate 342, aspartate 374, and threonine 375 together coordinate ADP. Glutamate 342 contacts AMP. ATP contacts are provided by glutamate 342, aspartate 374, and threonine 375. Aspartate 374 provides a ligand contact to Mg(2+).

It belongs to the phosphoglycerate kinase family. As to quaternary structure, monomer. Mg(2+) serves as cofactor.

The protein localises to the cytoplasm. The catalysed reaction is (2R)-3-phosphoglycerate + ATP = (2R)-3-phospho-glyceroyl phosphate + ADP. It participates in carbohydrate degradation; glycolysis; pyruvate from D-glyceraldehyde 3-phosphate: step 2/5. This is Phosphoglycerate kinase, cytosolic (PGKB) from Leishmania mexicana.